Consider the following 296-residue polypeptide: Ribosomal RNA small subunit methyltransferase A (296 aa).

The S-adenosyl-L-methionine site is built by Asn-30, Leu-32, Gly-57, Glu-78, Asp-103, and Asn-128.

It belongs to the class I-like SAM-binding methyltransferase superfamily. rRNA adenine N(6)-methyltransferase family. RsmA subfamily.

The protein resides in the cytoplasm. It catalyses the reaction adenosine(1518)/adenosine(1519) in 16S rRNA + 4 S-adenosyl-L-methionine = N(6)-dimethyladenosine(1518)/N(6)-dimethyladenosine(1519) in 16S rRNA + 4 S-adenosyl-L-homocysteine + 4 H(+). In terms of biological role, specifically dimethylates two adjacent adenosines (A1518 and A1519) in the loop of a conserved hairpin near the 3'-end of 16S rRNA in the 30S particle. May play a critical role in biogenesis of 30S subunits. This Staphylococcus haemolyticus (strain JCSC1435) protein is Ribosomal RNA small subunit methyltransferase A.